A 509-amino-acid polypeptide reads, in one-letter code: ATP synthase subunit alpha (509 aa).

169 to 176 (GDRQTGKT) serves as a coordination point for ATP.

It belongs to the ATPase alpha/beta chains family. As to quaternary structure, F-type ATPases have 2 components, CF(1) - the catalytic core - and CF(0) - the membrane proton channel. CF(1) has five subunits: alpha(3), beta(3), gamma(1), delta(1), epsilon(1). CF(0) has three main subunits: a(1), b(2) and c(9-12). The alpha and beta chains form an alternating ring which encloses part of the gamma chain. CF(1) is attached to CF(0) by a central stalk formed by the gamma and epsilon chains, while a peripheral stalk is formed by the delta and b chains.

It is found in the cell inner membrane. The catalysed reaction is ATP + H2O + 4 H(+)(in) = ADP + phosphate + 5 H(+)(out). Functionally, produces ATP from ADP in the presence of a proton gradient across the membrane. The alpha chain is a regulatory subunit. The protein is ATP synthase subunit alpha of Paramagnetospirillum magneticum (strain ATCC 700264 / AMB-1) (Magnetospirillum magneticum).